Consider the following 365-residue polypeptide: Putative chalcone synthase (365 aa).

The active site involves cysteine 144.

This sequence belongs to the thiolase-like superfamily. Chalcone/stilbene synthases family.

It catalyses the reaction (E)-4-coumaroyl-CoA + 3 malonyl-CoA + 3 H(+) = 2',4,4',6'-tetrahydroxychalcone + 3 CO2 + 4 CoA. This chain is Putative chalcone synthase (bcsA), found in Bacillus subtilis (strain 168).